Here is a 144-residue protein sequence, read N- to C-terminus: 3-hydroxyacyl-[acyl-carrier-protein] dehydratase FabZ (144 aa).

His49 is an active-site residue.

This sequence belongs to the thioester dehydratase family. FabZ subfamily.

It is found in the cytoplasm. It carries out the reaction a (3R)-hydroxyacyl-[ACP] = a (2E)-enoyl-[ACP] + H2O. Functionally, involved in unsaturated fatty acids biosynthesis. Catalyzes the dehydration of short chain beta-hydroxyacyl-ACPs and long chain saturated and unsaturated beta-hydroxyacyl-ACPs. This chain is 3-hydroxyacyl-[acyl-carrier-protein] dehydratase FabZ, found in Clostridium kluyveri (strain NBRC 12016).